The following is a 159-amino-acid chain: 2-C-methyl-D-erythritol 2,4-cyclodiphosphate synthase (159 aa).

Residues Asp-10 and His-12 each coordinate a divalent metal cation. 4-CDP-2-C-methyl-D-erythritol 2-phosphate contacts are provided by residues 10–12 (DVH) and 36–37 (HS). Residue His-44 coordinates a divalent metal cation. Residues 58–60 (DIG), 63–67 (FSDTD), and Arg-144 each bind 4-CDP-2-C-methyl-D-erythritol 2-phosphate.

The protein belongs to the IspF family. As to quaternary structure, homotrimer. A divalent metal cation is required as a cofactor.

It carries out the reaction 4-CDP-2-C-methyl-D-erythritol 2-phosphate = 2-C-methyl-D-erythritol 2,4-cyclic diphosphate + CMP. It participates in isoprenoid biosynthesis; isopentenyl diphosphate biosynthesis via DXP pathway; isopentenyl diphosphate from 1-deoxy-D-xylulose 5-phosphate: step 4/6. Involved in the biosynthesis of isopentenyl diphosphate (IPP) and dimethylallyl diphosphate (DMAPP), two major building blocks of isoprenoid compounds. Catalyzes the conversion of 4-diphosphocytidyl-2-C-methyl-D-erythritol 2-phosphate (CDP-ME2P) to 2-C-methyl-D-erythritol 2,4-cyclodiphosphate (ME-CPP) with a corresponding release of cytidine 5-monophosphate (CMP). In Paraburkholderia xenovorans (strain LB400), this protein is 2-C-methyl-D-erythritol 2,4-cyclodiphosphate synthase.